A 474-amino-acid polypeptide reads, in one-letter code: PRAME family member 8 (474 aa).

The LRR 1; degenerate repeat unit spans residues 97 to 122; it reads QSKLQVLDLRNVDENFCDIFSGATAS. One copy of the LRR 2; degenerate repeat lies at 177-201; the sequence is HVCCKELQVFGMPIHSIIEVLNMVE. Residues 202 to 228 form an LRR 3; degenerate repeat; the sequence is LDCIQEVEVCCPWELSTLVKFAPYLGQ. The stretch at 229–264 is one LRR 4; degenerate repeat; sequence MRNLRKLVLFNIRASACIPPDNKGQFIARFTSQFLK. 5 LRR repeats span residues 265-290, 291-322, 323-341, 347-374, and 375-399; these read LDYFQNLSMHSVSFLEGHLDQLLRCL, QASLEMVVMTDCLLSESDLKHLSWCPSIRQLK, ELDLRGVTLTHFSPEPLTG, VATLQTLDLEDCGIMDSQLSAILPVLSR, and CSQLSTFSFCGNLISMAALENLLRH.

This sequence belongs to the PRAME family.

In Homo sapiens (Human), this protein is PRAME family member 8.